Consider the following 296-residue polypeptide: tRNA uridine(34) hydroxylase (296 aa).

The Rhodanese domain occupies 130-225 (RGEDVVFFDG…YGEAYGDRGL (96 aa)). Catalysis depends on C185, which acts as the Cysteine persulfide intermediate.

The protein belongs to the TrhO family.

It catalyses the reaction uridine(34) in tRNA + AH2 + O2 = 5-hydroxyuridine(34) in tRNA + A + H2O. In terms of biological role, catalyzes oxygen-dependent 5-hydroxyuridine (ho5U) modification at position 34 in tRNAs. This Kocuria rhizophila (strain ATCC 9341 / DSM 348 / NBRC 103217 / DC2201) protein is tRNA uridine(34) hydroxylase.